A 490-amino-acid polypeptide reads, in one-letter code: Aspartyl/glutamyl-tRNA(Asn/Gln) amidotransferase subunit B (490 aa).

The protein belongs to the GatB/GatE family. GatB subfamily. In terms of assembly, heterotrimer of A, B and C subunits.

It carries out the reaction L-glutamyl-tRNA(Gln) + L-glutamine + ATP + H2O = L-glutaminyl-tRNA(Gln) + L-glutamate + ADP + phosphate + H(+). The enzyme catalyses L-aspartyl-tRNA(Asn) + L-glutamine + ATP + H2O = L-asparaginyl-tRNA(Asn) + L-glutamate + ADP + phosphate + 2 H(+). Its function is as follows. Allows the formation of correctly charged Asn-tRNA(Asn) or Gln-tRNA(Gln) through the transamidation of misacylated Asp-tRNA(Asn) or Glu-tRNA(Gln) in organisms which lack either or both of asparaginyl-tRNA or glutaminyl-tRNA synthetases. The reaction takes place in the presence of glutamine and ATP through an activated phospho-Asp-tRNA(Asn) or phospho-Glu-tRNA(Gln). The chain is Aspartyl/glutamyl-tRNA(Asn/Gln) amidotransferase subunit B from Methylobacterium nodulans (strain LMG 21967 / CNCM I-2342 / ORS 2060).